The primary structure comprises 108 residues: UPF0102 protein Shewana3_3881 (108 aa).

This sequence belongs to the UPF0102 family.

The polypeptide is UPF0102 protein Shewana3_3881 (Shewanella sp. (strain ANA-3)).